The sequence spans 453 residues: UDP-glycosyltransferase 74E2 (453 aa).

Histidine 17 serves as the catalytic Proton acceptor. Histidine 17 provides a ligand contact to an anthocyanidin. Aspartate 109 acts as the Charge relay in catalysis. Residues threonine 131, glutamine 334, histidine 349, tryptophan 352, asparagine 353, serine 354, glutamate 357, aspartate 373, and glutamine 374 each contribute to the UDP-alpha-D-glucose site.

It belongs to the UDP-glycosyltransferase family. In terms of tissue distribution, expressed in roots, cotyledons and leaf hydathodes.

It catalyses the reaction (indol-3-yl)butanoate + UDP-alpha-D-glucose = 4-(indol-3-yl)butanoyl-beta-D-glucose + UDP. Its function is as follows. Glucosyltransferase that acts on the auxin indole-3-butyric acid (IBA). Mediates abiotic stress responses and stress-induced morphological adaptations by regulating auxin homeostasis. Possesses low activity in vitro on jasmonate (JA) and the synthetic auxin analog naphthaleneacetic acid (NAA). This chain is UDP-glycosyltransferase 74E2 (UGT74E2), found in Arabidopsis thaliana (Mouse-ear cress).